The sequence spans 331 residues: Pantothenate kinase (331 aa).

109–116 (GSVAVGKS) lines the ATP pocket.

The protein belongs to the prokaryotic pantothenate kinase family.

The protein resides in the cytoplasm. The enzyme catalyses (R)-pantothenate + ATP = (R)-4'-phosphopantothenate + ADP + H(+). The protein operates within cofactor biosynthesis; coenzyme A biosynthesis; CoA from (R)-pantothenate: step 1/5. The chain is Pantothenate kinase from Sinorhizobium fredii (strain NBRC 101917 / NGR234).